A 274-amino-acid polypeptide reads, in one-letter code: 16S rRNA (guanine(1405)-N(7))-methyltransferase (274 aa).

Residues phenylalanine 64, 102-104, arginine 108, alanine 133, aspartate 156, 182-183, leucine 198, and glutamine 207 each bind S-adenosyl-L-methionine; these read HMS and DL.

The protein belongs to the methyltransferase superfamily. Aminoglycoside resistance family.

The catalysed reaction is guanosine(1405) in 16S rRNA + S-adenosyl-L-methionine = N(7)-methylguanosine(1405) in 16S rRNA + S-adenosyl-L-homocysteine. In terms of biological role, specifically methylates the N(7) position of guanine 1405 in 16S rRNA. Confers resistance to aminoglycosides. The sequence is that of 16S rRNA (guanine(1405)-N(7))-methyltransferase (grm) from Micromonospora rosea.